The chain runs to 465 residues: UDP-N-acetylmuramoylalanine--D-glutamate ligase (465 aa).

115–121 (GTDGKTT) contacts ATP.

It belongs to the MurCDEF family.

It is found in the cytoplasm. It catalyses the reaction UDP-N-acetyl-alpha-D-muramoyl-L-alanine + D-glutamate + ATP = UDP-N-acetyl-alpha-D-muramoyl-L-alanyl-D-glutamate + ADP + phosphate + H(+). It functions in the pathway cell wall biogenesis; peptidoglycan biosynthesis. In terms of biological role, cell wall formation. Catalyzes the addition of glutamate to the nucleotide precursor UDP-N-acetylmuramoyl-L-alanine (UMA). This chain is UDP-N-acetylmuramoylalanine--D-glutamate ligase, found in Chlorobaculum tepidum (strain ATCC 49652 / DSM 12025 / NBRC 103806 / TLS) (Chlorobium tepidum).